Consider the following 1403-residue polypeptide: MKALLDLFKQVTAEEEFDAITIGLASPDKIRSWSYGEVKKPETINYRTFKPERDGLFCAKIFGPIKDYECLCGKYKRLKHRGVICEKCGVEVTLAKVRRDRMGHIELASPTAHIWFLKSLPSRLGMVLDMTLRDIERVLYFEAYVVTDPGMVSNLQRAQLLTEDQYLEMVEEHGDEFQALMGAEGIRELLRNLELDSEVESLHAELEVTGSEAKNKKLAKRLKILEGFQKSGIKPDWMILEVLPVLPPDLRPLVPLDGGRFATSDLNDLYRRVINRNNRLKRLLELKAPEIIVRNEKRMLQESVDSLLDNGRRGKAMTGANKRPLKSLADMIKGKGGRFRQNLLGKRVDYSGRSVIVVGPQLKLHQCGLPKLMALELFKPFIFHKLEVLGYATTIKQAKKMVEGQEPVVWDILEDVIREHPVMLNRAPTLHRLGIQAFEPTLIEGKAIQLHPLVCAAFNADFDGDQMAVHVPLSLEAQMEARTLMLASNNVLSPANGQPIIVPSQDIVLGLYYATREKINGKGEGMYFADTAEIERAMAAGQLDVHSRISVRLKQYEPAAVDGEWEEKTVRVETTAGRALLAKILPKGLPFKAIDRALKKKEISKLIDESFRRCGLKETVIFADKLMQNGYALATRAGISFCSDDMLVPAKKYEIISSAEAEVKEIETQYTNGLVTQGERYNKVVDIWGRTGDQVAKVMMEELGHEEVIDRHGKKVKQDSFNSIYMMADSGARGSAAQIRQLAGMRGLMAKPDGSIIETPITTNFREGLNVLQYFISTHGARKGLADTALKTANSGYLTRRLVDVTQDLVITEDDCGTKNGFVVKALVEGGEVIEALRERILGRVTVDDLIDPETQETVIFAGTMLDEDLVDLIDKLGIDEVKVRTPLTCDTRYGLCAQCYGRDLGRGTMVNAGEAVGVIAAQSIGEPGTQLTMRTFHVGGAASRAAVADKVEGKSAGTVRYTSNMRYVTSAKGEKVVISRSGEVLIVDDHGRERERHKVPYGAMLSVDEDKSVKAGAKLATWDPHTRPIITEYAGTVRFENVEEGVTVAKQVDDVTGLSTLVVIDHKRGGKAAVKGVRPVVKLLDESGQEVRVHGSDHTVSIAFQVGSIISVVDGQQVGVGDVLARMPQESAKTRDITGGLPRVAELFEARTPKDASVLAEVTGTISFGKDTKGKQRLVITDLEGNVHEFLISKDKHVLVHDGQVVNKGEKIVEGEPDPHDILRLQGIEALARYITDEVQDVYRLQGVKINDKHIEVIVRQMLRRVTIVEPGDTKFIKSEQVERAELLAENDRANAEGKIPATIEHMLLGITKASLSTDSFISAASFQETTRVLTEAAIMGKRDELRGLKENVIVGRLIPAGTGLAFHRSRKAQLAGEDIAASRQIEEATAENTTQEADQGL.

Zn(2+)-binding residues include C70, C72, C85, and C88. Mg(2+) is bound by residues D461, D463, and D465. Residues C816, C890, C897, and C900 each contribute to the Zn(2+) site.

This sequence belongs to the RNA polymerase beta' chain family. In terms of assembly, the RNAP catalytic core consists of 2 alpha, 1 beta, 1 beta' and 1 omega subunit. When a sigma factor is associated with the core the holoenzyme is formed, which can initiate transcription. Requires Mg(2+) as cofactor. Zn(2+) is required as a cofactor.

It catalyses the reaction RNA(n) + a ribonucleoside 5'-triphosphate = RNA(n+1) + diphosphate. In terms of biological role, DNA-dependent RNA polymerase catalyzes the transcription of DNA into RNA using the four ribonucleoside triphosphates as substrates. The polypeptide is DNA-directed RNA polymerase subunit beta' (Dechloromonas aromatica (strain RCB)).